The primary structure comprises 164 residues: UPF0251 protein MM_1448 (164 aa).

Basic and acidic residues predominate over residues 91–100 (GDYRMPRGDR). Residues 91 to 123 (GDYRMPRGDRTGPAGQGPAGGGRGRGQGKGRGG) are disordered. The span at 104 to 115 (AGQGPAGGGRGR) shows a compositional bias: gly residues.

It belongs to the UPF0251 family.

The chain is UPF0251 protein MM_1448 from Methanosarcina mazei (strain ATCC BAA-159 / DSM 3647 / Goe1 / Go1 / JCM 11833 / OCM 88) (Methanosarcina frisia).